Consider the following 420-residue polypeptide: L-cysteine:1D-myo-inositol 2-amino-2-deoxy-alpha-D-glucopyranoside ligase (420 aa).

Position 46 (Cys-46) interacts with Zn(2+). Residues 46–49 (CGIT), Thr-61, and 84–86 (NVT) each bind L-cysteinyl-5'-AMP. The 'HIGH' region motif lies at 48 to 58 (ITPYDSTHLGH). The short motif at 194 to 199 (ERGGDP) is the 'ERGGDP' region element. L-cysteinyl-5'-AMP is bound at residue Trp-235. Cys-239 is a Zn(2+) binding site. 257–259 (GTD) is an L-cysteinyl-5'-AMP binding site. Residue His-264 participates in Zn(2+) binding. Val-291 provides a ligand contact to L-cysteinyl-5'-AMP. Residues 297 to 301 (KMSKS) carry the 'KMSKS' region motif.

The protein belongs to the class-I aminoacyl-tRNA synthetase family. MshC subfamily. Monomer. Requires Zn(2+) as cofactor.

It carries out the reaction 1D-myo-inositol 2-amino-2-deoxy-alpha-D-glucopyranoside + L-cysteine + ATP = 1D-myo-inositol 2-(L-cysteinylamino)-2-deoxy-alpha-D-glucopyranoside + AMP + diphosphate + H(+). Catalyzes the ATP-dependent condensation of GlcN-Ins and L-cysteine to form L-Cys-GlcN-Ins. The protein is L-cysteine:1D-myo-inositol 2-amino-2-deoxy-alpha-D-glucopyranoside ligase of Beutenbergia cavernae (strain ATCC BAA-8 / DSM 12333 / CCUG 43141 / JCM 11478 / NBRC 16432 / NCIMB 13614 / HKI 0122).